The primary structure comprises 234 residues: Polycomb group RING finger protein 5-A (234 aa).

The segment at 18-57 (CSICRGYLIKPTAVTECLHTFCKSCIVQHFEESNECPECG) adopts an RING-type zinc-finger fold. The tract at residues 97–130 (FWRKHKIKSNGEDGPRAKKSRLSGEDDDGNGGDY) is disordered.

As to quaternary structure, component of a PRC1-like complex.

Its subcellular location is the nucleus. Component of Polycomb group (PcG) multiprotein complexes; the complex class is required to maintain the transcriptionally repressive state of some genes. This Danio rerio (Zebrafish) protein is Polycomb group RING finger protein 5-A.